Reading from the N-terminus, the 81-residue chain is Photosystem I iron-sulfur center (81 aa).

2 4Fe-4S ferredoxin-type domains span residues 2–31 (SHSV…MIPW) and 39–68 (IASA…VRVY). The [4Fe-4S] cluster site is built by Cys11, Cys14, Cys17, Cys21, Cys48, Cys51, Cys54, and Cys58.

As to quaternary structure, the eukaryotic PSI reaction center is composed of at least 11 subunits. The cofactor is [4Fe-4S] cluster.

The protein localises to the plastid. It is found in the chloroplast thylakoid membrane. It carries out the reaction reduced [plastocyanin] + hnu + oxidized [2Fe-2S]-[ferredoxin] = oxidized [plastocyanin] + reduced [2Fe-2S]-[ferredoxin]. In terms of biological role, apoprotein for the two 4Fe-4S centers FA and FB of photosystem I (PSI); essential for photochemical activity. FB is the terminal electron acceptor of PSI, donating electrons to ferredoxin. The C-terminus interacts with PsaA/B/D and helps assemble the protein into the PSI complex. Required for binding of PsaD and PsaE to PSI. PSI is a plastocyanin-ferredoxin oxidoreductase, converting photonic excitation into a charge separation, which transfers an electron from the donor P700 chlorophyll pair to the spectroscopically characterized acceptors A0, A1, FX, FA and FB in turn. The chain is Photosystem I iron-sulfur center from Spinacia oleracea (Spinach).